A 93-amino-acid polypeptide reads, in one-letter code: Histone H2B (93 aa).

Positions 1–12 (MPEPAKSAPAPK) are enriched in low complexity. The disordered stretch occupies residues 1-31 (MPEPAKSAPAPKKGSKKAVTKTQKKGDKKRX). Lysine 6 and lysine 13 each carry N6-acetyllysine. Over residues 13-28 (KGSKKAVTKTQKKGDK) the composition is skewed to basic residues. Serine 15 is subject to Phosphoserine. Lysine 16 and lysine 21 each carry N6-acetyllysine.

Belongs to the histone H2B family. In terms of assembly, the nucleosome is a histone octamer containing two molecules each of H2A, H2B, H3 and H4 assembled in one H3-H4 heterotetramer and two H2A-H2B heterodimers. The octamer wraps approximately 147 bp of DNA. In terms of processing, monoubiquitination at the C-terminal Lys gives a specific tag for epigenetic transcriptional activation and is also prerequisite for histone H3 'Lys-4' and 'Lys-79' methylation. Phosphorylated on Ser-15 during apoptosis; which facilitates apoptotic chromatin condensation.

It localises to the nucleus. Its subcellular location is the chromosome. Core component of nucleosome. Nucleosomes wrap and compact DNA into chromatin, limiting DNA accessibility to the cellular machineries which require DNA as a template. Histones thereby play a central role in transcription regulation, DNA repair, DNA replication and chromosomal stability. DNA accessibility is regulated via a complex set of post-translational modifications of histones, also called histone code, and nucleosome remodeling. The protein is Histone H2B of Crocodylus niloticus (Nile crocodile).